We begin with the raw amino-acid sequence, 557 residues long: Organic cation/carnitine transporter 2 (557 aa).

At 1 to 20 the chain is on the cytoplasmic side; sequence MRDYDEVTAFLGEWGPFQRL. Residues 21–41 traverse the membrane as a helical segment; that stretch reads IFFLLSASIIPNGFTGLSSVF. The Extracellular portion of the chain corresponds to 42–142; that stretch reads LIATPEHRCR…NLVCEDDWKA (101 aa). N-linked (GlcNAc...) asparagine glycosylation is found at Asn-57, Asn-64, and Asn-91. A helical transmembrane segment spans residues 143 to 163; it reads PLTISLFFVGVLLGSFISGQL. Residues 164 to 172 are Cytoplasmic-facing; it reads SDRFGRKNV. The helical transmembrane segment at 173 to 193 threads the bilayer; that stretch reads LFVTMGMQTGFSFLQIFSKNF. Over 194 to 197 the chain is Extracellular; it reads EMFV. The chain crosses the membrane as a helical span at residues 198-218; that stretch reads VLFVLVGMGQISNYVAAFVLG. 218–225 is an ATP binding site; it reads GTEILGKS. Over 219–232 the chain is Cytoplasmic; that stretch reads TEILGKSVRIIFST. Residues 233-253 form a helical membrane-spanning segment; it reads LGVCIFYAFGYMVLPLFAYFI. Topologically, residues 254-257 are extracellular; sequence RDWR. The helical transmembrane segment at 258 to 278 threads the bilayer; it reads MLLVALTMPGVLCVALWWFIP. Topologically, residues 279–341 are cytoplasmic; sequence ESPRWLISQG…LDLLRTWNIR (63 aa). Residues 342-362 form a helical membrane-spanning segment; sequence MVTIMSIMLWMTISVGYFGLS. Residues 363 to 373 are Extracellular-facing; it reads LDTPNLHGDIF. Residues 374–394 form a helical membrane-spanning segment; that stretch reads VNCFLSAMVEVPAYVLAWLLL. Over 395–406 the chain is Cytoplasmic; that stretch reads QYLPRRYSMATA. Residues 407-427 form a helical membrane-spanning segment; the sequence is LFLGGSVLLFMQLVPPDLYYL. Over 428–430 the chain is Extracellular; that stretch reads ATV. Residues 431–451 form a helical membrane-spanning segment; it reads LVMVGKFGVTAAFSMVYVYTA. Residues 452–462 lie on the Cytoplasmic side of the membrane; the sequence is ELYPTVVRNMG. Residues 463 to 483 form a helical membrane-spanning segment; that stretch reads VGVSSTASRLGSILSPYFVYL. Residues 484–488 are Extracellular-facing; the sequence is GAYDR. Tyr-486 is subject to Phosphotyrosine. A helical transmembrane segment spans residues 489 to 509; it reads FLPYILMGSLTILTAILTLFL. Residues 535 to 557 are disordered; it reads TPSHTRMLKDGQERPTILKSTAF. Thr-550 carries the phosphothreonine modification.

The protein belongs to the major facilitator (TC 2.A.1) superfamily. Organic cation transporter (TC 2.A.1.19) family. In terms of assembly, interacts with PDZK1. Post-translationally, glycosylated. Glycosylation affects the expression levels. In terms of processing, not glycosylated. As to expression, strongly expressed in kidney, skeletal muscle, heart and placenta. Primarily expressed by surface epithelial cells of the colon (at protein level). Expressed in CD68 macrophage and CD43 T-cells but not in CD20 B-cells. In testis, localized to Sertoli cell basal membranes, peritubular myoid cells and Leydig cells.

It is found in the cell membrane. The protein localises to the apical cell membrane. The protein resides in the basal cell membrane. Its subcellular location is the endoplasmic reticulum. It catalyses the reaction (R)-carnitine(out) + Na(+)(out) = (R)-carnitine(in) + Na(+)(in). The catalysed reaction is glycine betaine(out) + Na(+)(out) = glycine betaine(in) + Na(+)(in). The enzyme catalyses glycine betaine(out) + (R)-carnitine(in) = glycine betaine(in) + (R)-carnitine(out). It carries out the reaction O-butanoyl-(R)-carnitine(out) + Na(+)(out) = O-butanoyl-(R)-carnitine(in) + Na(+)(in). It catalyses the reaction O-acetyl-(R)-carnitine(out) + Na(+)(out) = O-acetyl-(R)-carnitine(in) + Na(+)(in). The catalysed reaction is O-propanoyl-(R)-carnitine(out) + Na(+)(out) = O-propanoyl-(R)-carnitine(in) + Na(+)(in). The enzyme catalyses (S)-carnitine(out) + Na(+)(out) = (S)-carnitine(in) + Na(+)(in). It carries out the reaction an O-acyl-(R)-carnitine(out) + Na(+)(out) = an O-acyl-(R)-carnitine(in) + Na(+)(in). It catalyses the reaction L-glutamyl-L-arginyl-glycyl-L-methionyl-L-threonine(out) + Na(+)(out) = L-glutamyl-L-arginyl-glycyl-L-methionyl-L-threonine(in) + Na(+)(in). The catalysed reaction is N,N-dimethylglycine(out) + Na(+)(out) = N,N-dimethylglycine(in) + Na(+)(in). Its activity is regulated as follows. Inhibited by emetine, quinidine and verapamil. The IC(50) of emetine is 4.2 uM. Not inhibited by valproic acid. Transport of (R)-carnitine is stimulated by cholesterol in the plasma membrane. Functionally, sodium-ion dependent, high affinity carnitine transporter. Involved in the active cellular uptake of carnitine. Transports one sodium ion with one molecule of carnitine. Also transports organic cations such as tetraethylammonium (TEA) without the involvement of sodium. Relative uptake activity ratio of carnitine to TEA is 11.3. In intestinal epithelia, transports the quorum-sensing pentapeptide CSF (competence and sporulation factor) from B.subtilis which induces cytoprotective heat shock proteins contributing to intestinal homeostasis. May also contribute to regulate the transport of organic compounds in testis across the blood-testis-barrier. Retained in the ER, unable to perform carnitine uptake. The sequence is that of Organic cation/carnitine transporter 2 from Homo sapiens (Human).